Reading from the N-terminus, the 463-residue chain is L-seryl-tRNA(Sec) selenium transferase (463 aa).

Residue lysine 295 is modified to N6-(pyridoxal phosphate)lysine.

This sequence belongs to the SelA family. In terms of assembly, homodecamer; pentamer of dimers. Binds only one seryl-tRNA(Sec) per dimer. Requires pyridoxal 5'-phosphate as cofactor.

It localises to the cytoplasm. It carries out the reaction L-seryl-tRNA(Sec) + selenophosphate + H(+) = L-selenocysteinyl-tRNA(Sec) + phosphate. It functions in the pathway aminoacyl-tRNA biosynthesis; selenocysteinyl-tRNA(Sec) biosynthesis; selenocysteinyl-tRNA(Sec) from L-seryl-tRNA(Sec) (bacterial route): step 1/1. Its function is as follows. Converts seryl-tRNA(Sec) to selenocysteinyl-tRNA(Sec) required for selenoprotein biosynthesis. The protein is L-seryl-tRNA(Sec) selenium transferase of Photorhabdus laumondii subsp. laumondii (strain DSM 15139 / CIP 105565 / TT01) (Photorhabdus luminescens subsp. laumondii).